Consider the following 130-residue polypeptide: Small ribosomal subunit protein uS11 (130 aa).

This sequence belongs to the universal ribosomal protein uS11 family. In terms of assembly, part of the 30S ribosomal subunit. Interacts with proteins S7 and S18. Binds to IF-3.

Its function is as follows. Located on the platform of the 30S subunit, it bridges several disparate RNA helices of the 16S rRNA. Forms part of the Shine-Dalgarno cleft in the 70S ribosome. This Alteromonas mediterranea (strain DSM 17117 / CIP 110805 / LMG 28347 / Deep ecotype) protein is Small ribosomal subunit protein uS11.